Reading from the N-terminus, the 393-residue chain is Dual specificity mitogen-activated protein kinase kinase 1 (393 aa).

Residues 1–27 (MPKKKPTPIQLNPAPDGSAVNGTSSAE) are disordered. The Protein kinase domain occupies 68 to 361 (FEKISELGAG…LKQLMVHAFI (294 aa)). ATP is bound by residues 74-82 (LGAGNGGVV) and Lys97. Catalysis depends on Asp190, which acts as the Proton acceptor. 2 positions are modified to phosphoserine; by RAF: Ser218 and Ser222. The segment at 270–307 (ELELLFGCHVEGDAAETPPRPRTPGRPLSSYGMDSRPP) is RAF1-binding. The residue at position 286 (Thr286) is a Phosphothreonine. Phosphothreonine; by MAPK1 is present on Thr292. Residue Ser298 is modified to Phosphoserine; by PAK.

This sequence belongs to the protein kinase superfamily. STE Ser/Thr protein kinase family. MAP kinase kinase subfamily. In terms of assembly, found in a complex with at least BRAF, HRAS, MAP2K1, MAPK3/ERK1 and RGS14. Forms a heterodimer with MAP2K2/MEK2. Forms heterodimers with KSR2 which further dimerize to form tetramers. Interacts with KSR1 or KSR2 and BRAF; the interaction with KSR1 or KSR2 mediates KSR1-BRAF or KSR2-BRAF dimerization. Interacts with ARBB2, LAMTOR3, MAPK1/ERK2 and RAF1. Interacts with MAPK1/ERK2. Interacts with MORG1. Interacts with PPARG. Interacts with SGK1. Interacts with BIRC6/bruce. Interacts with KAT7; the interaction promotes KAT7 phosphorylation. Interacts with RAF1 and NEK10; the interaction is required for ERK1/2-signaling pathway activation in response to UV irradiation. Interacts with TRAF3IP3. Interacts with MOS. In terms of processing, phosphorylation at Ser-218 and Ser-222 by MAP kinase kinase kinases (BRAF or MEKK1) positively regulates kinase activity. Also phosphorylated at Thr-292 by MAPK1/ERK2 and at Ser-298 by PAK. MAPK1/ERK2 phosphorylation of Thr-292 occurs in response to cellular adhesion and leads to inhibition of Ser-298 phosphorylation by PAK. Autophosphorylated at Ser-218 and Ser-222, autophosphosphorylation is promoted by NEK10 following UV irradiation.

The protein resides in the cytoplasm. It is found in the cytoskeleton. Its subcellular location is the microtubule organizing center. The protein localises to the centrosome. It localises to the spindle pole body. The protein resides in the nucleus. It is found in the membrane. It catalyses the reaction L-seryl-[protein] + ATP = O-phospho-L-seryl-[protein] + ADP + H(+). It carries out the reaction L-threonyl-[protein] + ATP = O-phospho-L-threonyl-[protein] + ADP + H(+). The catalysed reaction is L-tyrosyl-[protein] + ATP = O-phospho-L-tyrosyl-[protein] + ADP + H(+). Ras proteins such as HRAS mediate the activation of RAF proteins such as RAF1 or BRAF which in turn activate extracellular signal-regulated kinases (ERK) through MAPK (mitogen-activated protein kinases) and ERK kinases MAP2K1/MEK1 and MAP2K2/MEK2. Activation occurs through phosphorylation of Ser-218 and Ser-222. MAP2K1/MEK1 binds KSR1 or KSR2 releasing the inhibitory intramolecular interaction between KSR1 or KSR2 protein kinase and N-terminal domains. This allows KSR1 or KSR2 dimerization with BRAF leading to BRAF activation and phosphorylation of MAP2K1. MAP2K1/MEK1 is also the target of negative feed-back regulation by its substrate kinases, such as MAPK1/ERK2. These phosphorylate MAP2K1/MEK1 on Thr-292, thereby facilitating dephosphorylation of the activating residues Ser-218 and Ser-222. Inhibited by serine/threonine phosphatase 2A. Its function is as follows. Dual specificity protein kinase which acts as an essential component of the MAP kinase signal transduction pathway. Binding of extracellular ligands such as growth factors, cytokines and hormones to their cell-surface receptors activates RAS and this initiates RAF1 activation. RAF1 then further activates the dual-specificity protein kinases MAP2K1/MEK1 and MAP2K2/MEK2. Both MAP2K1/MEK1 and MAP2K2/MEK2 function specifically in the MAPK/ERK cascade, and catalyze the concomitant phosphorylation of a threonine and a tyrosine residue in a Thr-Glu-Tyr sequence located in the extracellular signal-regulated kinases MAPK3/ERK1 and MAPK1/ERK2, leading to their activation and further transduction of the signal within the MAPK/ERK cascade. Activates BRAF in a KSR1 or KSR2-dependent manner; by binding to KSR1 or KSR2 releases the inhibitory intramolecular interaction between KSR1 or KSR2 protein kinase and N-terminal domains which promotes KSR1 or KSR2-BRAF dimerization and BRAF activation. Depending on the cellular context, this pathway mediates diverse biological functions such as cell growth, adhesion, survival and differentiation, predominantly through the regulation of transcription, metabolism and cytoskeletal rearrangements. One target of the MAPK/ERK cascade is peroxisome proliferator-activated receptor gamma (PPARG), a nuclear receptor that promotes differentiation and apoptosis. MAP2K1/MEK1 has been shown to export PPARG from the nucleus. The MAPK/ERK cascade is also involved in the regulation of endosomal dynamics, including lysosome processing and endosome cycling through the perinuclear recycling compartment (PNRC), as well as in the fragmentation of the Golgi apparatus during mitosis. The chain is Dual specificity mitogen-activated protein kinase kinase 1 (Map2k1) from Mus musculus (Mouse).